A 218-amino-acid polypeptide reads, in one-letter code: Glutathione S-transferase Mu 1 (218 aa).

The 87-residue stretch at 2–88 folds into the GST N-terminal domain; the sequence is PMILGYWDIR…YIARKHNLCG (87 aa). Residues 7 to 8, 43 to 46, Lys-50, 59 to 60, and 72 to 73 contribute to the glutathione site; these read YW, RSQW, NL, and QS. Residues 90 to 208 form the GST C-terminal domain; sequence TEEEMIRVDI…KSSRFLPGPL (119 aa). Tyr-116 is a binding site for substrate.

Belongs to the GST superfamily. Mu family. In terms of assembly, homodimer.

The protein resides in the cytoplasm. It carries out the reaction RX + glutathione = an S-substituted glutathione + a halide anion + H(+). It catalyses the reaction prostaglandin A2 + glutathione = prostaglandin A2-S-(R)-glutathione. The catalysed reaction is prostaglandin J2 + glutathione = prostaglandin J2-S-(R)-glutathione. The enzyme catalyses prostaglandin J2 + glutathione = prostaglandin J2-S-(S)-glutathione. It carries out the reaction prostaglandin A2 + glutathione = prostaglandin A2-S-(S)-glutathione. It catalyses the reaction 11(S)-hydroxy-14(S),15(S)-epoxy-(5Z,8Z,12E)-eicosatrienoate + glutathione = (11S,15S)-dihydroxy-14(R)-S-glutathionyl-(5Z,8Z,12E)-eicosatrienoate. In terms of biological role, conjugation of reduced glutathione to a wide number of exogenous and endogenous hydrophobic electrophiles. Protects against the thiol-mediated metal-catalyzed oxidative inactivation of enzymes. Involved in the formation of glutathione conjugates of both prostaglandin A2 (PGA2) and prostaglandin J2 (PGJ2). Participates in the formation of novel hepoxilin regioisomers. The protein is Glutathione S-transferase Mu 1 (GSTM1) of Bos taurus (Bovine).